Reading from the N-terminus, the 471-residue chain is Probable ribonuclease FAU-1 (471 aa).

Belongs to the FAU-1 family.

Probable RNase involved in rRNA stability through maturation and/or degradation of precursor rRNAs. Binds to RNA in loop regions with AU-rich sequences. The sequence is that of Probable ribonuclease FAU-1 from Thermococcus gammatolerans (strain DSM 15229 / JCM 11827 / EJ3).